The chain runs to 163 residues: Phosphopantetheine adenylyltransferase (163 aa).

A substrate-binding site is contributed by Thr10. ATP-binding positions include 10–11 and His18; that span reads TF. Residues Lys42, Leu74, and Arg88 each coordinate substrate. ATP contacts are provided by residues 89–91, Glu99, and 124–130; these read GLR and NSFISST.

It belongs to the bacterial CoaD family. In terms of assembly, homohexamer. Mg(2+) is required as a cofactor.

Its subcellular location is the cytoplasm. It carries out the reaction (R)-4'-phosphopantetheine + ATP + H(+) = 3'-dephospho-CoA + diphosphate. It participates in cofactor biosynthesis; coenzyme A biosynthesis; CoA from (R)-pantothenate: step 4/5. In terms of biological role, reversibly transfers an adenylyl group from ATP to 4'-phosphopantetheine, yielding dephospho-CoA (dPCoA) and pyrophosphate. This chain is Phosphopantetheine adenylyltransferase, found in Shewanella sp. (strain W3-18-1).